The sequence spans 159 residues: Small ribosomal subunit protein uS7 (159 aa).

This sequence belongs to the universal ribosomal protein uS7 family. Part of the 30S ribosomal subunit. Contacts proteins S9 and S11.

One of the primary rRNA binding proteins, it binds directly to 16S rRNA where it nucleates assembly of the head domain of the 30S subunit. Is located at the subunit interface close to the decoding center, probably blocks exit of the E-site tRNA. This is Small ribosomal subunit protein uS7 from Wolbachia pipientis wMel.